The sequence spans 131 residues: Phosphomevalonate dehydratase small subunit (131 aa).

The active-site Proton acceptor is the S62.

It belongs to the AcnX type II small subunit family. Heterodimer composed of a large subunit (PMDh-L) and a small subunit (PMDh-S).

The enzyme catalyses (R)-5-phosphomevalonate = (2E)-3-methyl-5-phosphooxypent-2-enoate + H2O. It participates in isoprenoid biosynthesis; isopentenyl diphosphate biosynthesis via mevalonate pathway. Its function is as follows. Component of a hydro-lyase that catalyzes the dehydration of mevalonate 5-phosphate (MVA5P) to form trans-anhydromevalonate 5-phosphate (tAHMP). Involved in the archaeal mevalonate (MVA) pathway, which provides fundamental precursors for isoprenoid biosynthesis, such as isopentenyl diphosphate (IPP) and dimethylallyl diphosphate (DMAPP). This Thermococcus gammatolerans (strain DSM 15229 / JCM 11827 / EJ3) protein is Phosphomevalonate dehydratase small subunit.